A 449-amino-acid chain; its full sequence is Na(+)-translocating NADH-quinone reductase subunit A (449 aa).

The protein belongs to the NqrA family. In terms of assembly, composed of six subunits; NqrA, NqrB, NqrC, NqrD, NqrE and NqrF.

The enzyme catalyses a ubiquinone + n Na(+)(in) + NADH + H(+) = a ubiquinol + n Na(+)(out) + NAD(+). In terms of biological role, NQR complex catalyzes the reduction of ubiquinone-1 to ubiquinol by two successive reactions, coupled with the transport of Na(+) ions from the cytoplasm to the periplasm. NqrA to NqrE are probably involved in the second step, the conversion of ubisemiquinone to ubiquinol. The protein is Na(+)-translocating NADH-quinone reductase subunit A of Serratia proteamaculans (strain 568).